We begin with the raw amino-acid sequence, 606 residues long: Armadillo repeat-containing X-linked protein 5 (606 aa).

The segment at 1-85 is disordered; the sequence is MIGSKTKRKA…KVKKKKDKTN (85 aa). Over residues 15–26 the composition is skewed to polar residues; sequence GASSKPGTNSPA. Residues 40-59 show a composition bias toward basic and acidic residues; that stretch reads VKAEPKEEWGNQAEARDEAV. ARM repeat units lie at residues 349-388, 470-509, 511-551, and 568-606; these read CKSR…GISP, VKFD…CLSK, QANT…NINF, and SELI…ILKL.

The protein belongs to the eutherian X-chromosome-specific Armcx family. In terms of tissue distribution, highly expressed in the developing neural tissues, neural crest derivatives and hind limbs.

This Mus musculus (Mouse) protein is Armadillo repeat-containing X-linked protein 5 (Armcx5).